The chain runs to 416 residues: Alpha-1-antiproteinase (416 aa).

Residues 1 to 24 (MALSITRGLLLLAALCCLAPISLA) form the signal peptide. N-linked (GlcNAc...) asparagine glycans are attached at residues Asn-68, Asn-105, Asn-143, and Asn-269. Residues 371 to 390 (GSTFLEAIPMSLPPDVEFNR) form an RCL region. Residue Ser-381 is modified to Phosphoserine.

Belongs to the serpin family. As to quaternary structure, interacts with CELA2A. Interacts with ERGIC3 and LMAN1/ERGIC53. Interacts with PRSS1/Trypsin. Plasma.

The protein localises to the secreted. In terms of biological role, inhibitor of serine proteases. Its primary target is elastase, but it also has a moderate affinity for plasmin and thrombin. Inhibits trypsin, chymotrypsin and plasminogen activator. This Bos taurus (Bovine) protein is Alpha-1-antiproteinase (SERPINA1).